A 471-amino-acid polypeptide reads, in one-letter code: Argininosuccinate lyase (471 aa).

This sequence belongs to the lyase 1 family. Argininosuccinate lyase subfamily.

It localises to the cytoplasm. It carries out the reaction 2-(N(omega)-L-arginino)succinate = fumarate + L-arginine. It participates in amino-acid biosynthesis; L-arginine biosynthesis; L-arginine from L-ornithine and carbamoyl phosphate: step 3/3. This chain is Argininosuccinate lyase, found in Deinococcus radiodurans (strain ATCC 13939 / DSM 20539 / JCM 16871 / CCUG 27074 / LMG 4051 / NBRC 15346 / NCIMB 9279 / VKM B-1422 / R1).